A 150-amino-acid chain; its full sequence is 3-hydroxyacyl-[acyl-carrier-protein] dehydratase FabZ (150 aa).

His-54 is a catalytic residue.

The protein belongs to the thioester dehydratase family. FabZ subfamily.

It is found in the cytoplasm. The enzyme catalyses a (3R)-hydroxyacyl-[ACP] = a (2E)-enoyl-[ACP] + H2O. Its function is as follows. Involved in unsaturated fatty acids biosynthesis. Catalyzes the dehydration of short chain beta-hydroxyacyl-ACPs and long chain saturated and unsaturated beta-hydroxyacyl-ACPs. In Pseudoalteromonas translucida (strain TAC 125), this protein is 3-hydroxyacyl-[acyl-carrier-protein] dehydratase FabZ.